Reading from the N-terminus, the 317-residue chain is Cytochrome c biogenesis protein CcsA (317 aa).

A run of 7 helical transmembrane segments spans residues 13–35, 44–64, 71–91, 143–163, 171–191, 225–245, and 286–306; these read ISFSIIAIVITTHLMTLLVHEIV, GMIATFFCITGLLVTRWIYSG, LYESLMFLSWSFSLILMVPYF, MLLSYAALLCGSLLSIALLVI, MIGFTNHLLIWPFSFGEIKYL, VIGLGFTFSTIGILSGAVWAN, and AIVASMGFLIIWICYFGVNLL.

It belongs to the CcmF/CycK/Ccl1/NrfE/CcsA family. As to quaternary structure, may interact with Ccs1.

The protein localises to the plastid. It is found in the chloroplast thylakoid membrane. Its function is as follows. Required during biogenesis of c-type cytochromes (cytochrome c6 and cytochrome f) at the step of heme attachment. The polypeptide is Cytochrome c biogenesis protein CcsA (Illicium oligandrum (Star anise)).